A 137-amino-acid chain; its full sequence is ATP synthase epsilon chain, chloroplastic (137 aa).

This sequence belongs to the ATPase epsilon chain family. As to quaternary structure, F-type ATPases have 2 components, CF(1) - the catalytic core - and CF(0) - the membrane proton channel. CF(1) has five subunits: alpha(3), beta(3), gamma(1), delta(1), epsilon(1). CF(0) has three main subunits: a, b and c.

It is found in the plastid. The protein localises to the chloroplast thylakoid membrane. Its function is as follows. Produces ATP from ADP in the presence of a proton gradient across the membrane. The chain is ATP synthase epsilon chain, chloroplastic from Pinus thunbergii (Japanese black pine).